A 413-amino-acid polypeptide reads, in one-letter code: Histidine--tRNA ligase (413 aa).

The protein belongs to the class-II aminoacyl-tRNA synthetase family. Homodimer.

It is found in the cytoplasm. The catalysed reaction is tRNA(His) + L-histidine + ATP = L-histidyl-tRNA(His) + AMP + diphosphate + H(+). In Neorickettsia sennetsu (strain ATCC VR-367 / Miyayama) (Ehrlichia sennetsu), this protein is Histidine--tRNA ligase.